A 212-amino-acid polypeptide reads, in one-letter code: Ribosomal RNA small subunit methyltransferase G (212 aa).

S-adenosyl-L-methionine-binding positions include Gly80, Leu85, 131 to 132 (AE), and Arg146.

It belongs to the methyltransferase superfamily. RNA methyltransferase RsmG family.

The protein resides in the cytoplasm. It catalyses the reaction guanosine(527) in 16S rRNA + S-adenosyl-L-methionine = N(7)-methylguanosine(527) in 16S rRNA + S-adenosyl-L-homocysteine. Specifically methylates the N7 position of guanine in position 527 of 16S rRNA. The sequence is that of Ribosomal RNA small subunit methyltransferase G from Xanthomonas axonopodis pv. citri (strain 306).